Consider the following 212-residue polypeptide: Putative tyrosine-protein phosphatase R622 (212 aa).

Residues 9-191 (KISQVTNNIF…LQGYQSKKEN (183 aa)) enclose the Tyrosine-protein phosphatase domain. Cysteine 135 acts as the Phosphocysteine intermediate in catalysis.

Belongs to the protein-tyrosine phosphatase family. Non-receptor class dual specificity subfamily.

It carries out the reaction O-phospho-L-tyrosyl-[protein] + H2O = L-tyrosyl-[protein] + phosphate. In Acanthamoeba polyphaga mimivirus (APMV), this protein is Putative tyrosine-protein phosphatase R622.